The sequence spans 248 residues: MANQRKFFVGGNWKMNGDRAGIDSIISFMKGPLSADTEVVVGCPQCYLMYTREHLPSNIGVAAQNCYKVAKGAFTGEISPSMIKDCGCEWVILGHSERRNVFNEPDTLISEKVGHALEAGLKVIPCIGEKLEERESNRTEEVVFAQMKALVPNISDWSRVVIAYEPVWAIGTGKTATPEQAQEVHAKLRQWLRDNVNAEVADSTRIIYGGSVTPGNCKELAKTGDIDGFLVGGASLKPDFVQIINARD.

The substrate site is built by Asn-12 and Lys-14. The segment at 16–30 is igE-binding; it reads NGDRAGIDSIISFMK. Residue His-95 is the Electrophile of the active site. The active-site Proton acceptor is Glu-165. IgE-binding regions lie at residues 166-180 and 205-219; these read PVWAIGTGKTATPEQ and RIIYGGSVTPGNCKE.

This sequence belongs to the triosephosphate isomerase family. In terms of assembly, homodimer. In terms of tissue distribution, expressed in skeletal muscle (at protein level).

Its subcellular location is the cytoplasm. The enzyme catalyses D-glyceraldehyde 3-phosphate = dihydroxyacetone phosphate. It carries out the reaction dihydroxyacetone phosphate = methylglyoxal + phosphate. It functions in the pathway carbohydrate biosynthesis; gluconeogenesis. It participates in carbohydrate degradation; glycolysis; D-glyceraldehyde 3-phosphate from glycerone phosphate: step 1/1. Its function is as follows. Triosephosphate isomerase is an extremely efficient metabolic enzyme that catalyzes the interconversion between dihydroxyacetone phosphate (DHAP) and D-glyceraldehyde-3-phosphate (G3P) in glycolysis and gluconeogenesis. Functionally, it is also responsible for the non-negligible production of methylglyoxal a reactive cytotoxic side-product that modifies and can alter proteins, DNA and lipids. The sequence is that of Triosephosphate isomerase from Procambarus clarkii (Red swamp crayfish).